The primary structure comprises 119 residues: Large ribosomal subunit protein uL24 (119 aa).

The protein belongs to the universal ribosomal protein uL24 family. In terms of assembly, part of the 50S ribosomal subunit.

Its function is as follows. One of two assembly initiator proteins, it binds directly to the 5'-end of the 23S rRNA, where it nucleates assembly of the 50S subunit. In terms of biological role, one of the proteins that surrounds the polypeptide exit tunnel on the outside of the subunit. The protein is Large ribosomal subunit protein uL24 of Arthrobacter sp. (strain FB24).